A 381-amino-acid chain; its full sequence is Putative glycosyltransferase EpsD (381 aa).

The protein belongs to the glycosyltransferase group 1 family. Glycosyltransferase 4 subfamily.

In terms of biological role, may be involved in the production of the exopolysaccharide (EPS) component of the extracellular matrix during biofilm formation. EPS is responsible for the adhesion of chains of cells into bundles. Required for biofilm maintenance. The sequence is that of Putative glycosyltransferase EpsD (epsD) from Bacillus subtilis (strain 168).